We begin with the raw amino-acid sequence, 119 residues long: Putative nitrilase-like protein YIL165C (119 aa).

The 82-residue stretch at 1 to 82 folds into the CN hydrolase domain; sequence MKNIAYEGRL…EGLLTAEINT (82 aa). The Proton acceptor role is filled by D21.

The protein belongs to the carbon-nitrogen hydrolase superfamily. Nitrilase family.

This chain is Putative nitrilase-like protein YIL165C, found in Saccharomyces cerevisiae (strain ATCC 204508 / S288c) (Baker's yeast).